The chain runs to 202 residues: Dephospho-CoA kinase (202 aa).

One can recognise a DPCK domain in the interval 5–202 (IVGLTGGIAS…DADYRARANP (198 aa)). Residue 13–18 (ASGKSA) coordinates ATP.

Belongs to the CoaE family.

Its subcellular location is the cytoplasm. It carries out the reaction 3'-dephospho-CoA + ATP = ADP + CoA + H(+). It participates in cofactor biosynthesis; coenzyme A biosynthesis; CoA from (R)-pantothenate: step 5/5. In terms of biological role, catalyzes the phosphorylation of the 3'-hydroxyl group of dephosphocoenzyme A to form coenzyme A. In Xanthomonas axonopodis pv. citri (strain 306), this protein is Dephospho-CoA kinase.